The following is a 155-amino-acid chain: V-type proton ATPase 16 kDa proteolipid subunit c (155 aa).

The Lumenal segment spans residues 1 to 10 (MADIKNNPEY). Residues 11 to 33 (SSFFGVMGASSAMVFSAMGAAYG) traverse the membrane as a helical segment. The Cytoplasmic segment spans residues 34–55 (TAKSGTGIAAMSVMRPELIMKS). Residues 56 to 76 (IIPVVMAGIIAIYGLVVAVLI) form a helical membrane-spanning segment. Residues 77–92 (ANSLTDGITLYRSFLQ) are Lumenal-facing. Residues 93-114 (LGAGLSVGLSGLAAGFAIGIVG) form a helical membrane-spanning segment. Over 115-131 (DAGVRGTAQQPRLFVGM) the chain is Cytoplasmic. Residues 132–152 (ILILIFAEVLGLYGLIVALIL) form a helical membrane-spanning segment. Residues 153–155 (STK) are Lumenal-facing.

Belongs to the V-ATPase proteolipid subunit family. V-ATPase is a heteromultimeric enzyme made up of two complexes: the ATP-hydrolytic V1 complex and the proton translocation V0 complex. The V1 complex consists of three catalytic AB heterodimers that form a heterohexamer, three peripheral stalks each consisting of EG heterodimers, one central rotor including subunits D and F, and the regulatory subunits C and H. The proton translocation complex V0 consists of the proton transport subunit a, a ring of proteolipid subunits c9c'', rotary subunit d, subunits e and f, and the accessory subunits ATP6AP1/Ac45 and ATP6AP2/PRR. Interacts with the V0 complex V-ATPase subunit a4 ATP6V0A4. Interacts with LASS2. Interacts with RNF182; this interaction leads to ubiquitination and degradation via the proteasome pathway. Ubiquitinated by RNF182, leading to its degradation via the ubiquitin-proteasome pathway.

Its subcellular location is the cytoplasmic vesicle. It is found in the clathrin-coated vesicle membrane. The protein resides in the secretory vesicle. The protein localises to the synaptic vesicle membrane. In terms of biological role, proton-conducting pore forming subunit of the V0 complex of vacuolar(H+)-ATPase (V-ATPase), a multisubunit enzyme composed of a peripheral complex (V1) that hydrolyzes ATP and a membrane integral complex (V0) that translocates protons. V-ATPase is responsible for acidifying and maintaining the pH of intracellular compartments and in some cell types, is targeted to the plasma membrane, where it is responsible for acidifying the extracellular environment. The protein is V-type proton ATPase 16 kDa proteolipid subunit c (Atp6v0c) of Mus musculus (Mouse).